A 150-amino-acid polypeptide reads, in one-letter code: Ribosome-binding factor A (150 aa).

Residues 126-150 (EVARDLSHDDDEDGGADEAPRNGDE) form a disordered region.

This sequence belongs to the RbfA family. In terms of assembly, monomer. Binds 30S ribosomal subunits, but not 50S ribosomal subunits or 70S ribosomes.

It is found in the cytoplasm. Its function is as follows. One of several proteins that assist in the late maturation steps of the functional core of the 30S ribosomal subunit. Associates with free 30S ribosomal subunits (but not with 30S subunits that are part of 70S ribosomes or polysomes). Required for efficient processing of 16S rRNA. May interact with the 5'-terminal helix region of 16S rRNA. The chain is Ribosome-binding factor A from Brucella suis (strain ATCC 23445 / NCTC 10510).